Here is a 365-residue protein sequence, read N- to C-terminus: Histidinol-phosphate aminotransferase (365 aa).

Residues 1 to 21 (MSRPVPNPGILDIAPYTPGKS) are disordered. Lysine 221 is subject to N6-(pyridoxal phosphate)lysine.

Belongs to the class-II pyridoxal-phosphate-dependent aminotransferase family. Histidinol-phosphate aminotransferase subfamily. As to quaternary structure, homodimer. Requires pyridoxal 5'-phosphate as cofactor.

The enzyme catalyses L-histidinol phosphate + 2-oxoglutarate = 3-(imidazol-4-yl)-2-oxopropyl phosphate + L-glutamate. It functions in the pathway amino-acid biosynthesis; L-histidine biosynthesis; L-histidine from 5-phospho-alpha-D-ribose 1-diphosphate: step 7/9. This Rhodopseudomonas palustris (strain ATCC BAA-98 / CGA009) protein is Histidinol-phosphate aminotransferase.